Reading from the N-terminus, the 309-residue chain is Wnt inhibitor of Dorsal protein (309 aa).

The first 16 residues, methionine 1–alanine 16, serve as a signal peptide directing secretion. 10 cysteine pairs are disulfide-bonded: cysteine 51–cysteine 62, cysteine 102–cysteine 110, cysteine 112–cysteine 121, cysteine 162–cysteine 179, cysteine 164–cysteine 174, cysteine 232–cysteine 269, cysteine 248–cysteine 262, cysteine 266–cysteine 308, cysteine 284–cysteine 299, and cysteine 286–cysteine 296.

This sequence belongs to the Wnt family.

Its subcellular location is the secreted. The protein resides in the extracellular space. The protein localises to the extracellular matrix. Binds as a ligand to a family of frizzled seven-transmembrane receptors and acts through a cascade of genes on the nucleus. This chain is Wnt inhibitor of Dorsal protein (wntD), found in Drosophila melanogaster (Fruit fly).